The following is a 402-amino-acid chain: Mannonate dehydratase 1 (402 aa).

It belongs to the mannonate dehydratase family. The cofactor is Fe(2+). Mn(2+) is required as a cofactor.

It carries out the reaction D-mannonate = 2-dehydro-3-deoxy-D-gluconate + H2O. The protein operates within carbohydrate metabolism; pentose and glucuronate interconversion. Catalyzes the dehydration of D-mannonate. The chain is Mannonate dehydratase 1 (uxuA1) from Agrobacterium fabrum (strain C58 / ATCC 33970) (Agrobacterium tumefaciens (strain C58)).